A 1002-amino-acid chain; its full sequence is Collagen alpha-2(I) chain (1002 aa).

Positions 1–1002 (SGGFDFSFLP…PGPPGPPGAS (1002 aa)) are disordered. 4-hydroxyproline occurs at positions 10, 13, 28, and 34. Positions 17-60 (GPMGLMGPRGPPGASGAPGPQGFQGPAGEPGEPGQTGPAGARGP) are enriched in low complexity. K89 carries the post-translational modification 5-hydroxylysine; alternate. The O-linked (Gal...) hydroxylysine; alternate glycan is linked to K89. Low complexity-rich tracts occupy residues 145–166 (SRGSDGSVGPVGPAGPIGSAGP) and 211–232 (PGANGLTGAKGAAGLPGVAGAP). The span at 266–275 (GESGGKGEPG) shows a compositional bias: gly residues. Positions 276–286 (SAGPQGPPGSS) are enriched in low complexity. Residues 308-317 (GLRGGPGSRG) are compositionally biased toward gly residues. Low complexity predominate over residues 330–346 (PAGARGASGPAGVRGPS). 4-hydroxyproline occurs at positions 352 and 355. Low complexity predominate over residues 381 to 400 (LPGIDGRPGPIGPAGARGEA). Positions 449-458 (GVQGGKGEQG) are enriched in gly residues. Composition is skewed to low complexity over residues 505–522 (PGESGAVGPSGAIGSRGP) and 534–544 (EPGVVGAPGTA). The segment covering 545–554 (GPAGSGGLPG) has biased composition (gly residues). Low complexity-rich tracts occupy residues 577–621 (VGTT…PRGS) and 628–648 (VGPAGPNGFAGPAGAAGQPGA). The segment covering 649-658 (KGERGTKGPK) has biased composition (basic and acidic residues). Positions 666–676 (PTGPVGSAGPA) are enriched in low complexity. Positions 686-695 (GSRGDGGPPG) are enriched in gly residues. A compositionally biased stretch (low complexity) spans 697–706 (TGFPGAAGRT). Gly residues predominate over residues 743-752 (GETGAGGPPG). Composition is skewed to low complexity over residues 760–787 (SGEPGTAGPPGTAGPQGLLGAPGILGLP) and 795–805 (LPGVAGAVGEP). The span at 806–828 (GPLGIGPPGARGPSGGVGPGVNG) shows a compositional bias: gly residues. The span at 833–851 (AGRDGPPGRDGLPGHKGER) shows a compositional bias: basic and acidic residues. Low complexity predominate over residues 853–898 (YAGNAGPVGAAGAPGPHGAVGPAGKHGNRGEPGPVGSAGPVGALGP). The span at 908 to 919 (RGDKGEAGDKGP) shows a compositional bias: basic and acidic residues. Residues 987–1002 (SGPPGPPGPPGPPGAS) are compositionally biased toward pro residues.

This sequence belongs to the fibrillar collagen family. Trimers of one alpha 2(I) and two alpha 1(I) chains. Interacts (via C-terminus) with TMEM131 (via PapD-L domain); the interaction is direct and is involved in assembly and TRAPPIII ER-to-Golgi transport complex-dependent secretion of collagen. Prolines at the third position of the tripeptide repeating unit (G-X-Y) are hydroxylated in some or all of the chains. As to expression, expressed in bones.

It localises to the secreted. The protein resides in the extracellular space. The protein localises to the extracellular matrix. Type I collagen is a member of group I collagen (fibrillar forming collagen). The sequence is that of Collagen alpha-2(I) chain from Glossotherium robustum (Ground sloth).